The following is a 657-amino-acid chain: Glycogen debranching enzyme (657 aa).

The active-site Nucleophile is aspartate 336. Glutamate 371 functions as the Proton donor in the catalytic mechanism. The segment covering 458-467 (NEANGEENRD) has biased composition (basic and acidic residues). Positions 458 to 479 (NEANGEENRDGTNNNYSNNHGK) are disordered.

The protein belongs to the glycosyl hydrolase 13 family.

The enzyme catalyses Hydrolysis of (1-&gt;6)-alpha-D-glucosidic linkages to branches with degrees of polymerization of three or four glucose residues in limit dextrin.. Its pathway is glycan degradation; glycogen degradation. Functionally, removes maltotriose and maltotetraose chains that are attached by 1,6-alpha-linkage to the limit dextrin main chain, generating a debranched limit dextrin. The sequence is that of Glycogen debranching enzyme from Escherichia coli (strain 55989 / EAEC).